The chain runs to 696 residues: D-(-)-3-hydroxybutyrate oligomer hydrolase (696 aa).

The first 26 residues, 1–26, serve as a signal peptide directing secretion; the sequence is MDTHGWGSRILVGAALAALTMLGACN. Ser-309 serves as the catalytic Charge relay system.

Belongs to the D-(-)-3-hydroxybutyrate oligomer hydrolase family.

It is found in the secreted. It carries out the reaction (3R)-hydroxybutanoate dimer + H2O = 2 (R)-3-hydroxybutanoate + H(+). It participates in lipid metabolism; butanoate metabolism. In terms of biological role, participates in the degradation of poly-3-hydroxybutyrate (PHB). It works downstream of poly(3-hydroxybutyrate) depolymerase, hydrolyzing D(-)-3-hydroxybutyrate oligomers of various length (3HB-oligomers) into 3HB-monomers. The protein is D-(-)-3-hydroxybutyrate oligomer hydrolase of Burkholderia vietnamiensis (strain G4 / LMG 22486) (Burkholderia cepacia (strain R1808)).